The chain runs to 245 residues: MPGRWSAETRLALVRRARRMNRALAQAFPHVYCELDFTTPLELAVATILSAQSTDKRVNLTTPALFARYRTARDYAQADRTELESLIRPTGFYRNKAASLIGLGQALVERFGGEVPATMDKLVTLPGVGRKTANVILGNAFGIPGITVDTHFGRLVRRWRWTTAEDPVKVEQAVGELIERKEWTLLSHRVIFHGRRVCHARRPACGVCVLAKDCPSFGLGPTEPLLAAPLVQGPETDHLLALAGL.

Positions 119–138 (MDKLVTLPGVGRKTANVILG) constitute a HhH domain. Residues Cys-198, Cys-205, Cys-208, and Cys-214 each contribute to the [4Fe-4S] cluster site.

This sequence belongs to the Nth/MutY family. The cofactor is [4Fe-4S] cluster.

It carries out the reaction 2'-deoxyribonucleotide-(2'-deoxyribose 5'-phosphate)-2'-deoxyribonucleotide-DNA = a 3'-end 2'-deoxyribonucleotide-(2,3-dehydro-2,3-deoxyribose 5'-phosphate)-DNA + a 5'-end 5'-phospho-2'-deoxyribonucleoside-DNA + H(+). Functionally, DNA repair enzyme that has both DNA N-glycosylase activity and AP-lyase activity. The DNA N-glycosylase activity releases various damaged pyrimidines from DNA by cleaving the N-glycosidic bond, leaving an AP (apurinic/apyrimidinic) site. The AP-lyase activity cleaves the phosphodiester bond 3' to the AP site by a beta-elimination, leaving a 3'-terminal unsaturated sugar and a product with a terminal 5'-phosphate. Has a preference for oxidized pyrimidines, such as thymine glycol (prefers 5S isomers) 5,6-dihydrouracil:G, 5-hydroxyuracil:G, 5-hydroxycytosine:G and urea:A. Cleaves ssDNA containing an AP site. In Mycobacterium tuberculosis (strain ATCC 25618 / H37Rv), this protein is Endonuclease III.